Here is a 400-residue protein sequence, read N- to C-terminus: Ubiquitin-like modifier-activating enzyme 5 (400 aa).

ATP is bound by residues glycine 76, aspartate 97, lysine 120, asparagine 143, and asparagine 177. Residues cysteine 219 and cysteine 222 each coordinate Zn(2+). Catalysis depends on cysteine 243, which acts as the Glycyl thioester intermediate. Zn(2+) is bound by residues cysteine 296 and cysteine 301.

Belongs to the ubiquitin-activating E1 family. UBA5 subfamily.

Functionally, E1-like enzyme which activates UFM1. In Drosophila virilis (Fruit fly), this protein is Ubiquitin-like modifier-activating enzyme 5.